Reading from the N-terminus, the 1168-residue chain is MLRMKLPPKSTHPSEPPPDAEEPEADARPGAKAPPRRRRDCRPPPPPPTGLPRGPPPPPPSPPRGLEPPVASGPTAGAGMPGGGGHAAALREQERVYEWFGLVLGSAQRLEFLCGLLDLCNPLELRFLGSCLEDLARKDYHYLRDSEAKANGLSDPGSLADFREPAVRSRLIVYLALLGSENREAAGRLHRLLPQVDAVLRSLRATRVEGSRGSVEDEPGGDDEQDAEKDGPGPEGGGCAKLGTGGGLGFRAQEELLLLFTMASLHPAFSFHQRVTLREHLERLRSALRVEPEDAEVEPSNFAGSRAQNDSACGDYIQSNETGLVEQAQIPQDGLTVAPHRAQREAVHIEKIMLKGVQRRRADKYWEYTFKVNWSDLSVTTVTKTHQELQEFLLKLPKEFSSESFDKTILKALNQGSLRREERRHPDLEPILRQLFSTSPQAFLQSHKVRSFFRSISSESQHSFNNLQSSLKTSKILEHLKEDSSEASSQEEDVLQHTIIHKKHAGKSPAGNVATSCALLEGLTMQYAEQNGVVDWRNQGCAAIQHSEHCVSSADQLSAEKRSLSSVNKKKGKPQVEKEKIKKTENRLSSRINGIRLSAPQHAHGSTVKDMNLDVGSGHDTCGETSSESYSSPSSPRHDGRESLESEEEKDRDTDSNSEDSGNPSSARFAGHGSVTQTVSVQPPADTVSLGTENGNLLEAPLTSHKYPHIPFMPTLPCVMHNGAQKSEVVIPSPKSADGKAVGVLVPNPVAISTMMESTNAAPVGILGPAASGESEKHLELLASPLPIPSPFLPHSSAPALQLTLQSLKLQPPQGASENCPVNIPQQAATRLSIGSPNTALIPVHNPGAFPGSPVAATDPITKSASQVVGLNQMVPQIEGNTGTVPQPNNVKVVLPAAGLSAAQPPASYTFPGSPLAASVLPTQNSTVLNTATSAQPASTGISPAQSTVPPAVPTHTPGPAPSPSPALTHSTAQSDSTSYISAVGNTNANSTIVPPQPLGPCGSCGRRCSCGTNGNLQLNSYYYPNPMPGPMYRLPSFFTLPSICNGSYLNQAHQSNGNQLPFFLPQTPYANGLVHDPVMGSQASYGMQQMAGFGRLYPVYPAPNVVANTSGSGPKKNGSVSCYNCGVSGHYAQDCKQSSMEANQQGTYRLRYAPPLPPSNDTLDSAD.

Disordered stretches follow at residues 1–87 (MLRM…GGHA), 209–242 (EGSR…CAKL), 561–693 (KRSL…LGTE), and 932–978 (ATSA…SDST). Positions 43–66 (PPPPPPTGLPRGPPPPPPSPPRGL) are enriched in pro residues. Low complexity predominate over residues 67–78 (EPPVASGPTAGA). The segment covering 216–227 (EDEPGGDDEQDA) has biased composition (acidic residues). Gly residues predominate over residues 233-242 (GPEGGGCAKL). The segment covering 574–588 (PQVEKEKIKKTENRL) has biased composition (basic and acidic residues). Positions 626 to 635 (SSESYSSPSS) are enriched in low complexity. Residues 636 to 655 (PRHDGRESLESEEEKDRDTD) are compositionally biased toward basic and acidic residues. A compositionally biased stretch (polar residues) spans 932–949 (ATSAQPASTGISPAQSTV). Residues 951 to 965 (PAVPTHTPGPAPSPS) show a composition bias toward pro residues. The span at 966 to 978 (PALTHSTAQSDST) shows a compositional bias: polar residues. The segment at 1121–1138 (VSCYNCGVSGHYAQDCKQ) adopts a CCHC-type zinc-finger fold.

The chain is Zinc finger CCHC domain-containing protein 2 (Zcchc2) from Rattus norvegicus (Rat).